A 1466-amino-acid polypeptide reads, in one-letter code: Immediate-early protein 2 (1466 aa).

8 disordered regions span residues M1–Y21, N223–G242, Y339–Q370, R428–A472, R517–N965, F1005–N1068, S1086–A1179, and T1191–I1223. Positions Y339–E350 are enriched in polar residues. Residues R428 to E437 are compositionally biased toward basic residues. Composition is skewed to basic and acidic residues over residues N443–A472 and P536–P553. 2 stretches are compositionally biased toward polar residues: residues K583–K595 and K640–F665. Residues N666–S681 are compositionally biased toward low complexity. The segment covering N696–L713 has biased composition (basic and acidic residues). Composition is skewed to low complexity over residues A720–A756 and R763–A772. Over residues S773 to N790 the composition is skewed to basic and acidic residues. The span at R791–A800 shows a compositional bias: low complexity. Residues S801–S814 are compositionally biased toward basic and acidic residues. Low complexity-rich tracts occupy residues S826 to A884 and S926 to A940. Positions R955–N965 are enriched in polar residues. The interaction with human UBE2I stretch occupies residues A989–N1037. Composition is skewed to low complexity over residues T1019 to S1029, G1053 to N1068, and S1086 to K1110. Over residues Q1116–H1131 the composition is skewed to basic and acidic residues. Positions H1162–E1177 are enriched in polar residues. Over residues L1195–R1213 the composition is skewed to basic residues.

It belongs to the herpesviridae IE2 family. In terms of assembly, interacts with human UBE2I in the nucleus. Although this interaction does not promote IE2 sumoylation, it represses transactivation activity.

Its subcellular location is the host nucleus. Transcriptional transactivator. This is Immediate-early protein 2 (U90/U86) from Homo sapiens (Human).